The primary structure comprises 359 residues: Molybdenum import ATP-binding protein ModC (359 aa).

An ABC transporter domain is found at 1–233 (MSGLTVSIRG…IDAESEGGGV (233 aa)). Position 32–39 (32–39 (GHSGAGKT)) interacts with ATP. The Mop domain maps to 289 to 355 (AISIRNLLPV…VKAVSVDRAA (67 aa)).

Belongs to the ABC transporter superfamily. Molybdate importer (TC 3.A.1.8) family. In terms of assembly, the complex is composed of two ATP-binding proteins (ModC), two transmembrane proteins (ModB) and a solute-binding protein (ModA).

It is found in the cell inner membrane. It catalyses the reaction molybdate(out) + ATP + H2O = molybdate(in) + ADP + phosphate + H(+). Its function is as follows. Part of the ABC transporter complex ModABC involved in molybdenum import. Responsible for energy coupling to the transport system. The chain is Molybdenum import ATP-binding protein ModC from Brucella suis biovar 1 (strain 1330).